The chain runs to 251 residues: Sec-independent protein translocase protein TatC (251 aa).

The next 6 membrane-spanning stretches (helical) occupy residues 23–43, 73–93, 104–124, 159–179, 197–217, and 218–238; these read AFIIIFAICYYFSDYIYSFLL, SAFTAFTIIIPIIALECYLFI, IIAFILFMSPILFWCGSIFVF, LVIHLIIAFGIAFQLPIVIIV, IAVVINFIIAGILTPPDILSQ, and FALAIPLLLLYETSIIICNFI.

Belongs to the TatC family. In terms of assembly, the Tat system comprises two distinct complexes: a TatABC complex, containing multiple copies of TatA, TatB and TatC subunits, and a separate TatA complex, containing only TatA subunits. Substrates initially bind to the TatABC complex, which probably triggers association of the separate TatA complex to form the active translocon.

It localises to the cell inner membrane. In terms of biological role, part of the twin-arginine translocation (Tat) system that transports large folded proteins containing a characteristic twin-arginine motif in their signal peptide across membranes. Together with TatB, TatC is part of a receptor directly interacting with Tat signal peptides. The sequence is that of Sec-independent protein translocase protein TatC from Rickettsia prowazekii (strain Madrid E).